An 807-amino-acid polypeptide reads, in one-letter code: Glycerol-3-phosphate acyltransferase (807 aa).

Residues 305 to 310 (CHRSHM) carry the HXXXXD motif motif.

It belongs to the GPAT/DAPAT family.

Its subcellular location is the cell inner membrane. It carries out the reaction sn-glycerol 3-phosphate + an acyl-CoA = a 1-acyl-sn-glycero-3-phosphate + CoA. The protein operates within phospholipid metabolism; CDP-diacylglycerol biosynthesis; CDP-diacylglycerol from sn-glycerol 3-phosphate: step 1/3. This chain is Glycerol-3-phosphate acyltransferase, found in Escherichia coli O139:H28 (strain E24377A / ETEC).